Here is a 20-residue protein sequence, read N- to C-terminus: Major extrapallial fluid protein (20 aa).

The interval 1-20 is disordered; that stretch reads NPVDDHHDDHHDAPIVEHHD.

As to quaternary structure, homodimer. Post-translationally, glycosylated.

Its function is as follows. Appears to be a building block of the soluble organic matrix of the shell. The protein binds calcium. The polypeptide is Major extrapallial fluid protein (Mytilus edulis (Blue mussel)).